We begin with the raw amino-acid sequence, 353 residues long: S-adenosylmethionine:tRNA ribosyltransferase-isomerase (353 aa).

Belongs to the QueA family. As to quaternary structure, monomer.

The protein localises to the cytoplasm. The catalysed reaction is 7-aminomethyl-7-carbaguanosine(34) in tRNA + S-adenosyl-L-methionine = epoxyqueuosine(34) in tRNA + adenine + L-methionine + 2 H(+). Its pathway is tRNA modification; tRNA-queuosine biosynthesis. Its function is as follows. Transfers and isomerizes the ribose moiety from AdoMet to the 7-aminomethyl group of 7-deazaguanine (preQ1-tRNA) to give epoxyqueuosine (oQ-tRNA). In Sodalis glossinidius (strain morsitans), this protein is S-adenosylmethionine:tRNA ribosyltransferase-isomerase.